We begin with the raw amino-acid sequence, 513 residues long: uncharacterized protein (513 aa).

Residues 1–48 are disordered; sequence MGSSEEQSVPGDDFYEESGDLNTGLSLVLRPAKSNEGESSLSSPKGSK. Polar residues predominate over residues 37–48; it reads GESSLSSPKGSK. Ser43, Ser84, and Ser123 each carry phosphoserine. 4 disordered regions span residues 210 to 229, 236 to 287, 390 to 414, and 453 to 481; these read DGNHGNQAKNSGPAETGDLA, TRDS…GSKS, AKEDTDSTRDPSSQVQFPTHRAEPP, and SVLSGDQEEPVGLPAPDSEILQLPGTQGC.

This is an uncharacterized protein from Mus musculus (Mouse).